The sequence spans 284 residues: VALDDEFEFDSYEVHHQANDTIDAGGNNKKDAKPEQSSIQSNLSKGKDKDVNVGTSGTHTVPRIKAITSKMRMPRSKGVAALNLEHLLEYAPQQIDISNTRATQSQFDTWYEAVRMAYDIGQTEMPTVMNGLMVWCIENGTSPNINGVWVMMDGNEQVEYPLKPIVENAKPTLRQIMAHFSDVAEAYIEMRNKKEPYMPRYGLIRNLRDISLARYAFDFYEVTSRTPVRAREAHIQMKAAALKSAQPRLFGLDGGISTQEENTERHTTEDVSPSMHTLLGGKNM.

Disordered stretches follow at residues His-16–Gly-57 and Gly-255–Met-284. Positions Glu-35–Ser-44 are enriched in polar residues.

The protein belongs to the potyviridae genome polyprotein family. In terms of processing, genome polyprotein of potyviruses undergoes post-translational proteolytic processing by the main proteinase NIa-pro resulting in the production of at least ten individual proteins. The P1 proteinase and the HC-pro cleave only their respective C-termini autocatalytically. 6K1 is essential for proper proteolytic separation of P3 from CI.

It is found in the virion. It catalyses the reaction RNA(n) + a ribonucleoside 5'-triphosphate = RNA(n+1) + diphosphate. Functionally, an RNA-dependent RNA polymerase that plays an essential role in the virus replication. In terms of biological role, involved in aphid transmission, cell-to-cell and systemis movement, encapsidation of the viral RNA and in the regulation of viral RNA amplification. The sequence is that of Genome polyprotein from Capsicum (peppers).